Here is a 249-residue protein sequence, read N- to C-terminus: MLKKIKISLILALGLTSLQAFGQENPDVKIEKLKDNLYVYTTYNTFNGTKYAANAVYLVTDKGVVVIDCPWGEDKFKSFTDEIYKKHGKKVIINIATHSHDDRAGGLEYFGKIGAKTYSTKMTDSILAKENKPRAQYTFDNNKSFKVGKSEFQVYYPGKGHTADNVVVWFPKEKVLVGGCIIKSADSKDLGYIGEAYVNDWTQSVHNIQQKFSGAQYVVAGHDDWKDQTSIQHTLDLISEYQQKQKASN.

Residues 1-22 (MLKKIKISLILALGLTSLQAFG) form the signal peptide. Positions 98, 100, 102, 161, and 180 each coordinate Zn(2+). Lysine 183 provides a ligand contact to substrate. Histidine 222 lines the Zn(2+) pocket.

The protein belongs to the metallo-beta-lactamase superfamily. Class-B beta-lactamase family. Monomer. The cofactor is Zn(2+).

The protein localises to the periplasm. The catalysed reaction is a beta-lactam + H2O = a substituted beta-amino acid. In terms of biological role, confers resistance to the different beta-lactams antibiotics (penicillin, cephalosporin and carbapenem) via the hydrolysis of the beta-lactam ring. The polypeptide is Metallo-beta-lactamase type 2 (blaB3) (Elizabethkingia meningoseptica (Chryseobacterium meningosepticum)).